The chain runs to 359 residues: Dual-specificity RNA methyltransferase RlmN (359 aa).

Glu-102 (proton acceptor) is an active-site residue. The 244-residue stretch at 108–351 (EKKRATLCIS…IRKNRGSDIQ (244 aa)) folds into the Radical SAM core domain. Residues Cys-115 and Cys-354 are joined by a disulfide bond. Cys-122, Cys-126, and Cys-129 together coordinate [4Fe-4S] cluster. S-adenosyl-L-methionine-binding positions include 178 to 179 (GE), Ser-210, 232 to 234 (SLH), and Asn-311. Catalysis depends on Cys-354, which acts as the S-methylcysteine intermediate.

This sequence belongs to the radical SAM superfamily. RlmN family. It depends on [4Fe-4S] cluster as a cofactor.

It localises to the cytoplasm. It carries out the reaction adenosine(2503) in 23S rRNA + 2 reduced [2Fe-2S]-[ferredoxin] + 2 S-adenosyl-L-methionine = 2-methyladenosine(2503) in 23S rRNA + 5'-deoxyadenosine + L-methionine + 2 oxidized [2Fe-2S]-[ferredoxin] + S-adenosyl-L-homocysteine. It catalyses the reaction adenosine(37) in tRNA + 2 reduced [2Fe-2S]-[ferredoxin] + 2 S-adenosyl-L-methionine = 2-methyladenosine(37) in tRNA + 5'-deoxyadenosine + L-methionine + 2 oxidized [2Fe-2S]-[ferredoxin] + S-adenosyl-L-homocysteine. Specifically methylates position 2 of adenine 2503 in 23S rRNA and position 2 of adenine 37 in tRNAs. m2A2503 modification seems to play a crucial role in the proofreading step occurring at the peptidyl transferase center and thus would serve to optimize ribosomal fidelity. The chain is Dual-specificity RNA methyltransferase RlmN from Buchnera aphidicola subsp. Cinara cedri (strain Cc).